The following is a 578-amino-acid chain: Glucans biosynthesis protein G (578 aa).

Positions 1–37 (MIVSPCIAPRIPGTRLRKAMLAGVALVGLLSAGQLWA) are cleaved as a signal peptide. Residues 511 to 578 (VPVEAPKPAK…TWSYQLPADE (68 aa)) are disordered. Residues 517–543 (KPAKDSKQDKAAAKHAHAKAEKAKAEQ) are compositionally biased toward basic and acidic residues. A compositionally biased stretch (low complexity) spans 544–554 (PAEQPAADAAS).

It belongs to the OpgD/OpgG family.

The protein localises to the periplasm. Its pathway is glycan metabolism; osmoregulated periplasmic glucan (OPG) biosynthesis. Involved in the biosynthesis of osmoregulated periplasmic glucans (OPGs). This is Glucans biosynthesis protein G from Pseudomonas entomophila (strain L48).